Consider the following 318-residue polypeptide: Serpentine receptor class delta-25 (318 aa).

Transmembrane regions (helical) follow at residues 5 to 25, 38 to 58, 88 to 108, 126 to 146, 176 to 196, 226 to 246, and 258 to 278; these read LLHS…MYLA, VVIT…FFVM, HMFM…SYLF, IAFY…SIYI, ITLL…YTFI, TFKL…VAMF, and IVSV…IIFV.

Belongs to the nematode receptor-like protein srd family.

It is found in the membrane. This is Serpentine receptor class delta-25 (srd-25) from Caenorhabditis elegans.